Here is a 327-residue protein sequence, read N- to C-terminus: GTPase Obg (327 aa).

The region spanning 3–160 is the Obg domain; that stretch reads NKFTDFIKIY…FIFVLELKIL (158 aa). The 167-residue stretch at 161–327 folds into the OBG-type G domain; sequence ADVGLIGLPN…LIYYICNILS (167 aa). GTP contacts are provided by residues 167 to 174, 192 to 196, 214 to 217, 281 to 284, and 308 to 310; these read GLPNSGKS, FTTLN, DIPG, SKSD, and SSF. Mg(2+) is bound by residues Ser174 and Thr194.

It belongs to the TRAFAC class OBG-HflX-like GTPase superfamily. OBG GTPase family. Monomer. Mg(2+) is required as a cofactor.

The protein resides in the cytoplasm. Functionally, an essential GTPase which binds GTP, GDP and possibly (p)ppGpp with moderate affinity, with high nucleotide exchange rates and a fairly low GTP hydrolysis rate. Plays a role in control of the cell cycle, stress response, ribosome biogenesis and in those bacteria that undergo differentiation, in morphogenesis control. This chain is GTPase Obg, found in Karelsulcia muelleri (strain GWSS) (Sulcia muelleri).